We begin with the raw amino-acid sequence, 185 residues long: Ribosome-recycling factor (185 aa).

The protein belongs to the RRF family.

The protein localises to the cytoplasm. In terms of biological role, responsible for the release of ribosomes from messenger RNA at the termination of protein biosynthesis. May increase the efficiency of translation by recycling ribosomes from one round of translation to another. This chain is Ribosome-recycling factor, found in Bacillus anthracis (strain CDC 684 / NRRL 3495).